Reading from the N-terminus, the 980-residue chain is Exportin-T (980 aa).

It belongs to the exportin family. In terms of tissue distribution, expressed in roots, stems, leaves, flowers and embryos.

It is found in the nucleus. Its subcellular location is the cytoplasm. Functionally, probable tRNA nucleus export receptor which regulates tRNA processing and facilitates tRNA translocation across the nuclear pore complex. Is required for correct leaf initiation at different developmental stages and may play a role in floral patterning. The chain is Exportin-T from Oryza sativa subsp. japonica (Rice).